The primary structure comprises 279 residues: Movement protein (279 aa).

Positions 246 to 279 are disordered; it reads SESEELNVESPPAAIGSSSASRSEAFRPQVVNGL. Residues 254–268 are compositionally biased toward low complexity; it reads ESPPAAIGSSSASRS.

It belongs to the cucumovirus movement protein family.

The protein resides in the host cell junction. Its subcellular location is the host plasmodesma. Its function is as follows. Transports viral genome to neighboring plant cells directly through plasmosdesmata, without any budding. The movement protein allows efficient cell to cell propagation, by bypassing the host cell wall barrier. Acts by forming a tubular structure at the host plasmodesmata, enlarging it enough to allow free passage of virion capsids. The sequence is that of Movement protein from Cucumis sativus (Cucumber).